Consider the following 89-residue polypeptide: Large ribosomal subunit protein bL27 (89 aa).

Positions 1–22 (MAHKKAGGSSRNGRDSESKRLG) are disordered.

It belongs to the bacterial ribosomal protein bL27 family.

In Brucella abortus (strain S19), this protein is Large ribosomal subunit protein bL27.